The primary structure comprises 65 residues: UPF0434 protein CPS_2127 (65 aa).

The protein belongs to the UPF0434 family.

The polypeptide is UPF0434 protein CPS_2127 (Colwellia psychrerythraea (strain 34H / ATCC BAA-681) (Vibrio psychroerythus)).